The primary structure comprises 414 residues: Glucose-1-phosphate adenylyltransferase (414 aa).

Alpha-D-glucose 1-phosphate-binding positions include Tyr99, Gly164, 181–182 (EK), and Ser199.

This sequence belongs to the bacterial/plant glucose-1-phosphate adenylyltransferase family. Homotetramer.

It catalyses the reaction alpha-D-glucose 1-phosphate + ATP + H(+) = ADP-alpha-D-glucose + diphosphate. The protein operates within glycan biosynthesis; glycogen biosynthesis. Its function is as follows. Involved in the biosynthesis of ADP-glucose, a building block required for the elongation reactions to produce glycogen. Catalyzes the reaction between ATP and alpha-D-glucose 1-phosphate (G1P) to produce pyrophosphate and ADP-Glc. In Bifidobacterium longum (strain DJO10A), this protein is Glucose-1-phosphate adenylyltransferase.